Reading from the N-terminus, the 59-residue chain is Embryonic testis differentiation protein homolog C (59 aa).

The tract at residues 1–22 is disordered; sequence MDKELPKASPSEPALNIKKSGK.

In Homo sapiens (Human), this protein is Embryonic testis differentiation protein homolog C.